The following is a 195-amino-acid chain: Cyclin-dependent kinase inhibitor 7 (195 aa).

Basic and acidic residues predominate over residues 1-11 (MSETKPKRDSE). Disordered stretches follow at residues 1–50 (MSET…SVSD), 61–80 (EEED…SSET), and 117–154 (SSEN…TQAE). Composition is skewed to low complexity over residues 37 to 50 (SSSS…SVSD) and 68 to 80 (SSSI…SSET). Thr151 carries the post-translational modification Phosphothreonine; by KIN10.

This sequence belongs to the CDI family. ICK/KRP subfamily. In terms of assembly, specifically interacts with CDKA-1, but not with CDKB1-1. Interacts with CYCD4-1. Binds to FBL17. Ubiquitinated by SCF(FBL17). Ubiquitination leads to its subsequent degradation, thus controlling cell cycle progression. Expressed in flowers, in developing pollen, and at lower levels in roots and leaves.

Its subcellular location is the nucleus. It localises to the nucleoplasm. In terms of biological role, binds and inhibits CYCD2-1/CDKA-1 complex kinase activity. May target specifically CDKA-1. The polypeptide is Cyclin-dependent kinase inhibitor 7 (KRP7) (Arabidopsis thaliana (Mouse-ear cress)).